The sequence spans 331 residues: Homeobox protein DBX1 (331 aa).

Disordered regions lie at residues 56-94 and 232-331; these read RAVP…ISSN and KERE…ITVS. Positions 173 to 232 form a DNA-binding region, homeobox; sequence GMLRRAVFSDVQRKALEKMFQKQKYISKPDRKKLAGKLGLKDSQVKIWFQNRRMKWRNSK. The segment covering 256–266 has biased composition (basic and acidic residues); the sequence is DLSDVSKKSSG. Positions 299 to 314 are enriched in low complexity; the sequence is PSSPFNSSSASKPSDF. Residues 315 to 331 show a composition bias toward acidic residues; that stretch reads SDSEEEGGEQEEEITVS.

This sequence belongs to the H2.0 homeobox family.

The protein resides in the nucleus. May function within the midpoint progenitor population to inhibit neuronal differentiation, possibly through modulating the function of Xash3. This chain is Homeobox protein DBX1 (dbx1), found in Xenopus laevis (African clawed frog).